The primary structure comprises 523 residues: GMP synthase [glutamine-hydrolyzing] (523 aa).

The Glutamine amidotransferase type-1 domain maps to 8–205 (KILILDFGSQ…VVNICGCTTN (198 aa)). Cysteine 85 (nucleophile) is an active-site residue. Active-site residues include histidine 179 and glutamate 181. The GMPS ATP-PPase domain maps to 206–398 (WTPENIIEDA…LGLPAEMLNR (193 aa)). ATP is bound at residue 233–239 (SGGVDSS).

As to quaternary structure, homodimer.

The catalysed reaction is XMP + L-glutamine + ATP + H2O = GMP + L-glutamate + AMP + diphosphate + 2 H(+). Its pathway is purine metabolism; GMP biosynthesis; GMP from XMP (L-Gln route): step 1/1. Catalyzes the synthesis of GMP from XMP. In Mannheimia succiniciproducens (strain KCTC 0769BP / MBEL55E), this protein is GMP synthase [glutamine-hydrolyzing].